The following is a 366-amino-acid chain: MAKRIIGTTPKEDGFRMPGEFEAQDQIFMIWPERPDNWRDGAKPVQIAFTNVAKAISRFTPVTMLVSQSQYQNARYQLPADVRVLEVSNNDSWVRDCGPSFVINDKGELRANDWTFNAWGGLVDGLYFPWDQDDLVAQKVCELERVDSYRTDDFVLEGGSFHVDGQGTVLTTEMCLLSEGRNPHMSKEDIENKLKEHLNAEKILWLGDGIDPEETNGHVDDVACFVAPGEVACIYTEDEKSPFYEAAQDAYKRLNQMTDAKGRQLKVHKLTCPAKNVTIKKQFRIDTVEGTMPREDGDICIASYMNFLITNKGVIVPQYGDENDALALKQVQEMFPDREIVGVNTVEVVYGGGNIHCITQQQPKAK.

The active-site Amidino-cysteine intermediate is the Cys357.

This sequence belongs to the agmatine deiminase family.

The enzyme catalyses agmatine + H2O = N-carbamoylputrescine + NH4(+). This is Putative agmatine deiminase from Lactococcus lactis subsp. lactis (strain IL1403) (Streptococcus lactis).